Consider the following 1943-residue polypeptide: Beta-L-arabinobiosidase (1943 aa).

Positions 1-32 form a signal peptide, tat-type signal; that stretch reads MHHSTRKRWLASIGAVAAVATLATGGAVTAQA. F5/8 type C domains lie at 892-1049 and 1142-1302; these read TNVD…AYNT and SKEI…AYAI. The 97-residue stretch at 1061 to 1157 folds into the PKD domain; it reads TPQVDAYVSS…HGIPSDGTVN (97 aa). 3 consecutive FIVAR domains span residues 1678-1716, 1746-1790, and 1823-1864; these read ANGL…EQVA, DAAK…AAVQ, and QAKK…VDAA. The interval 1875–1906 is disordered; it reads TKVEQKPGSQQPGVTDTDKDDKDNKGDRVPPT. Over residues 1890 to 1902 the composition is skewed to basic and acidic residues; it reads DTDKDDKDNKGDR. Residues 1908–1928 form a helical membrane-spanning segment; that stretch reads AAVSVVAAAAVLLTAAGVTIL.

This sequence belongs to the glycosyl hydrolase 121 family. In terms of processing, predicted to be exported by the Tat system. The position of the signal peptide cleavage has not been experimentally proven.

The protein resides in the membrane. The enzyme catalyses 4-O-(beta-L-arabinofuranosyl-(1-&gt;2)-beta-L-arabinofuranosyl-(1-&gt;2)-beta-L-arabinofuranosyl)-(2S,4S)-4-hydroxyproline + H2O = 4-O-(beta-L-arabinofuranosyl)-(2S,4S)-4-hydroxyproline + beta-L-arabinofuranosyl-(1-&gt;2)-beta-L-arabinofuranose. Its function is as follows. Beta-L-arabinobiosidase that removes L-arabinofuranose-beta-1,2-L-arabinofuranose disaccharide from various substrates such as carrot extensin and potato lectin. Also acts on L-arabinofuranose (Ara)-beta-1,2-Ara-beta-1,2-Ara-beta-Hyp (Ara(3)-Hyp) but not on Ara-beta-1,3-Ara-beta-1,2-Ara-beta-1,2-Ara-beta--Hyp (Ara(4)-Hyp) or Ara-beta-1,2-Ara-beta-Hyp (Ara(2)-Hyp), suggesting a specificity for unmodified Ara(3)-Hyp substrate. In the presence of 1-alkanols, shows transglycosylation activity, retaining the anomeric configuration of the arabinofuranose residue. This Bifidobacterium longum subsp. longum (strain ATCC 15707 / DSM 20219 / JCM 1217 / NCTC 11818 / E194b) protein is Beta-L-arabinobiosidase (hypBA2).